The sequence spans 280 residues: Extracellular metalloprotease GLRG_06286 (280 aa).

An N-terminal signal peptide occupies residues 1–17 (MQVTFTLVAALAGMASA). Residue Asn-51 is glycosylated (N-linked (GlcNAc...) asparagine). His-196 contributes to the Zn(2+) binding site. Residue Glu-197 is part of the active site. His-200 serves as a coordination point for Zn(2+). The segment at 217–236 (DSIADTPAQSSPSSGCPVGR) is disordered. Cys-232 and Cys-259 are oxidised to a cystine.

The protein belongs to the peptidase M43B family.

Its subcellular location is the secreted. Secreted metalloproteinase that allows assimilation of proteinaceous substrates. This Colletotrichum graminicola (strain M1.001 / M2 / FGSC 10212) (Maize anthracnose fungus) protein is Extracellular metalloprotease GLRG_06286.